A 535-amino-acid chain; its full sequence is Probable acyl-activating enzyme 22 (535 aa).

This sequence belongs to the ATP-dependent AMP-binding enzyme family.

Functionally, may act as an acid--thiol ligase that activates carboxylic acids by forming acyl-CoAs. The polypeptide is Probable acyl-activating enzyme 22 (AEE22) (Arabidopsis thaliana (Mouse-ear cress)).